The primary structure comprises 406 residues: MVMYEKTAEHFGQKFKDLPEGHLLVNLGPSHPATHGILQNVIQIDGERVVDTESVIGYVHRCFEKLGERYDYNQFLVCTDRMNYVSTPLNNIGWILTVEKMMQIQVPDRVTYVRMIISELSRIMDHIICNGIMGVDLGAFSGLLHLFHHRENIYQILEKLTGARLTTTFCRVGGMERDIYPEFQTEIKLILKGLKPALDEFEELLIRNKIFNERTKGIGGISADRAIAYGFSGPNLRAAGVPWDVRKDDPYMFYDKVNFDIPVGEDGSALDRTLVRMEEMRQSMKIIEQLIDGIPEGPYHADVPHSFLPPKDRVYHNMEELIYHFKIIMHGVKVPPGEYYHATEAANGELGFYVVSEGDKSPWRVHVRRPCFWYYQAFPEMVKGGLLADTIATMSSLNVIAGELDC.

It belongs to the complex I 49 kDa subunit family. As to quaternary structure, NDH-1 is composed of 14 different subunits. Subunits NuoB, C, D, E, F, and G constitute the peripheral sector of the complex.

The protein localises to the cell inner membrane. The catalysed reaction is a quinone + NADH + 5 H(+)(in) = a quinol + NAD(+) + 4 H(+)(out). In terms of biological role, NDH-1 shuttles electrons from NADH, via FMN and iron-sulfur (Fe-S) centers, to quinones in the respiratory chain. The immediate electron acceptor for the enzyme in this species is believed to be ubiquinone. Couples the redox reaction to proton translocation (for every two electrons transferred, four hydrogen ions are translocated across the cytoplasmic membrane), and thus conserves the redox energy in a proton gradient. The protein is NADH-quinone oxidoreductase subunit D of Leptospira biflexa serovar Patoc (strain Patoc 1 / Ames).